A 266-amino-acid chain; its full sequence is Glucosamine-6-phosphate deaminase (266 aa).

D72 functions as the Proton acceptor; for enolization step in the catalytic mechanism. D141 functions as the For ring-opening step in the catalytic mechanism. Residue H143 is the Proton acceptor; for ring-opening step of the active site. The active-site For ring-opening step is the E148.

It belongs to the glucosamine/galactosamine-6-phosphate isomerase family. NagB subfamily. In terms of assembly, homohexamer.

It carries out the reaction alpha-D-glucosamine 6-phosphate + H2O = beta-D-fructose 6-phosphate + NH4(+). It functions in the pathway amino-sugar metabolism; N-acetylneuraminate degradation; D-fructose 6-phosphate from N-acetylneuraminate: step 5/5. Allosterically activated by N-acetylglucosamine 6-phosphate (GlcNAc6P). In terms of biological role, catalyzes the reversible isomerization-deamination of glucosamine 6-phosphate (GlcN6P) to form fructose 6-phosphate (Fru6P) and ammonium ion. The chain is Glucosamine-6-phosphate deaminase from Pectobacterium carotovorum subsp. carotovorum (strain PC1).